Consider the following 272-residue polypeptide: Ethanolamine ammonia-lyase small subunit (272 aa).

Adenosylcob(III)alamin contacts are provided by Val161, Glu182, and Cys211.

The protein belongs to the EutC family. The basic unit is a heterodimer which dimerizes to form tetramers. The heterotetramers trimerize; 6 large subunits form a core ring with 6 small subunits projecting outwards. It depends on adenosylcob(III)alamin as a cofactor.

The protein localises to the bacterial microcompartment. The enzyme catalyses ethanolamine = acetaldehyde + NH4(+). Its pathway is amine and polyamine degradation; ethanolamine degradation. Its function is as follows. Catalyzes the deamination of various vicinal amino-alcohols to oxo compounds. Allows this organism to utilize ethanolamine as the sole source of nitrogen and carbon in the presence of external vitamin B12. The sequence is that of Ethanolamine ammonia-lyase small subunit from Pseudomonas putida (strain GB-1).